The primary structure comprises 404 residues: 2,3-diketo-5-methylthiopentyl-1-phosphate enolase (404 aa).

The Proton acceptor role is filled by Lys-91. Substrate contacts are provided by residues Lys-140, 166–169 (KDDE), His-257, Gly-329, and 351–352 (GG). Lys-166, Asp-168, and Glu-169 together coordinate Mg(2+). Lys-166 is modified (N6-carboxylysine).

Belongs to the RuBisCO large chain family. Type IV subfamily. Homodimer. The cofactor is Mg(2+).

The enzyme catalyses 5-methylsulfanyl-2,3-dioxopentyl phosphate = 2-hydroxy-5-methylsulfanyl-3-oxopent-1-enyl phosphate. It participates in amino-acid biosynthesis; L-methionine biosynthesis via salvage pathway; L-methionine from S-methyl-5-thio-alpha-D-ribose 1-phosphate: step 3/6. Functionally, catalyzes the enolization of 2,3-diketo-5-methylthiopentyl-1-phosphate (DK-MTP-1-P) into 2-hydroxy-3-keto-5-methylthiopentenyl-1-phosphate (HK-MTPenyl-1-P). In Bacillus velezensis (strain DSM 23117 / BGSC 10A6 / LMG 26770 / FZB42) (Bacillus amyloliquefaciens subsp. plantarum), this protein is 2,3-diketo-5-methylthiopentyl-1-phosphate enolase.